The chain runs to 261 residues: GTP cyclohydrolase FolE2 (261 aa).

It belongs to the GTP cyclohydrolase IV family.

It carries out the reaction GTP + H2O = 7,8-dihydroneopterin 3'-triphosphate + formate + H(+). Its pathway is cofactor biosynthesis; 7,8-dihydroneopterin triphosphate biosynthesis; 7,8-dihydroneopterin triphosphate from GTP: step 1/1. In terms of biological role, converts GTP to 7,8-dihydroneopterin triphosphate. This chain is GTP cyclohydrolase FolE2, found in Fervidobacterium nodosum (strain ATCC 35602 / DSM 5306 / Rt17-B1).